A 297-amino-acid chain; its full sequence is Small ribosomal subunit protein uS2 (297 aa).

Positions 276–297 are disordered; the sequence is DWASSAPAEGWAGEAPATEAKW.

Belongs to the universal ribosomal protein uS2 family. As to quaternary structure, component of the small ribosomal subunit. Mature ribosomes consist of a small (40S) and a large (60S) subunit. The 40S subunit contains about 33 different proteins and 1 molecule of RNA (18S). The 60S subunit contains about 49 different proteins and 3 molecules of RNA (25S, 5.8S and 5S). Interacts with RPS21.

The protein resides in the cytoplasm. Its function is as follows. Required for the assembly and/or stability of the 40S ribosomal subunit. Required for the processing of the 20S rRNA-precursor to mature 18S rRNA in a late step of the maturation of 40S ribosomal subunits. This is Small ribosomal subunit protein uS2 from Uncinocarpus reesii (strain UAMH 1704).